We begin with the raw amino-acid sequence, 455 residues long: Bifunctional protein GlmU (455 aa).

Residues 1–226 (MSLDIVILAA…AMEVQGANDR (226 aa)) are pyrophosphorylase. Residues 8–11 (LAAG), Lys-22, Gln-73, 78–79 (GT), 99–101 (YGD), Gly-136, Glu-151, Asn-166, and Asn-224 each bind UDP-N-acetyl-alpha-D-glucosamine. Residue Asp-101 participates in Mg(2+) binding. Asn-224 lines the Mg(2+) pocket. The interval 227–247 (RQLSELERHYQLREGRRLMAQ) is linker. An N-acetyltransferase region spans residues 248-455 (GVTLRDPARF…WKRPEKIKKS (208 aa)). UDP-N-acetyl-alpha-D-glucosamine-binding residues include Arg-330 and Lys-348. Residue His-360 is the Proton acceptor of the active site. Positions 363 and 374 each coordinate UDP-N-acetyl-alpha-D-glucosamine. Residues Ala-377, 383-384 (NY), Ser-402, Ala-420, and Arg-437 contribute to the acetyl-CoA site.

It in the N-terminal section; belongs to the N-acetylglucosamine-1-phosphate uridyltransferase family. The protein in the C-terminal section; belongs to the transferase hexapeptide repeat family. In terms of assembly, homotrimer. It depends on Mg(2+) as a cofactor.

The protein resides in the cytoplasm. It catalyses the reaction alpha-D-glucosamine 1-phosphate + acetyl-CoA = N-acetyl-alpha-D-glucosamine 1-phosphate + CoA + H(+). The catalysed reaction is N-acetyl-alpha-D-glucosamine 1-phosphate + UTP + H(+) = UDP-N-acetyl-alpha-D-glucosamine + diphosphate. Its pathway is nucleotide-sugar biosynthesis; UDP-N-acetyl-alpha-D-glucosamine biosynthesis; N-acetyl-alpha-D-glucosamine 1-phosphate from alpha-D-glucosamine 6-phosphate (route II): step 2/2. It functions in the pathway nucleotide-sugar biosynthesis; UDP-N-acetyl-alpha-D-glucosamine biosynthesis; UDP-N-acetyl-alpha-D-glucosamine from N-acetyl-alpha-D-glucosamine 1-phosphate: step 1/1. The protein operates within bacterial outer membrane biogenesis; LPS lipid A biosynthesis. In terms of biological role, catalyzes the last two sequential reactions in the de novo biosynthetic pathway for UDP-N-acetylglucosamine (UDP-GlcNAc). The C-terminal domain catalyzes the transfer of acetyl group from acetyl coenzyme A to glucosamine-1-phosphate (GlcN-1-P) to produce N-acetylglucosamine-1-phosphate (GlcNAc-1-P), which is converted into UDP-GlcNAc by the transfer of uridine 5-monophosphate (from uridine 5-triphosphate), a reaction catalyzed by the N-terminal domain. The chain is Bifunctional protein GlmU from Pseudomonas putida (strain ATCC 47054 / DSM 6125 / CFBP 8728 / NCIMB 11950 / KT2440).